Reading from the N-terminus, the 489-residue chain is Glutamyl-tRNA(Gln) amidotransferase subunit A (489 aa).

Active-site charge relay system residues include lysine 78 and serine 153. Serine 177 (acyl-ester intermediate) is an active-site residue.

It belongs to the amidase family. GatA subfamily. Heterotrimer of A, B and C subunits.

The enzyme catalyses L-glutamyl-tRNA(Gln) + L-glutamine + ATP + H2O = L-glutaminyl-tRNA(Gln) + L-glutamate + ADP + phosphate + H(+). Its function is as follows. Allows the formation of correctly charged Gln-tRNA(Gln) through the transamidation of misacylated Glu-tRNA(Gln) in organisms which lack glutaminyl-tRNA synthetase. The reaction takes place in the presence of glutamine and ATP through an activated gamma-phospho-Glu-tRNA(Gln). This is Glutamyl-tRNA(Gln) amidotransferase subunit A from Enterococcus faecalis (strain ATCC 700802 / V583).